Consider the following 358-residue polypeptide: Plastoglobulin-1, chloroplastic (358 aa).

The N-terminal 47 residues, 1 to 47, are a transit peptide targeting the chloroplast; that stretch reads MALLSSTLRAPLVFSKNPKPVSLSSLHSRIYLSPRSPRFPSLRFISA. The disordered stretch occupies residues 48-114; sequence AGDTGDAEKP…NDAGNGTPTF (67 aa).

The protein belongs to the PAP/fibrillin family.

The protein resides in the plastid. It localises to the chloroplast. May form together with other plastoglobulins a coat on the surface of the lipoprotein particle. The coat may contain receptors for attachment to the thylakoid membrane as well as regulatory proteins that may function in the transfer of lipids to and from the thylakoid membranes. The polypeptide is Plastoglobulin-1, chloroplastic (PG1) (Pisum sativum (Garden pea)).